A 340-amino-acid chain; its full sequence is Protein-arginine kinase (340 aa).

Residues 14–244 (IVITTRIRLA…EQIINQENLS (231 aa)) form the Phosphagen kinase C-terminal domain. ATP-binding positions include 17-21 (TTRIR), H81, R115, 166-170 (RASVM), and 197-202 (RGLWGE).

It belongs to the ATP:guanido phosphotransferase family.

It catalyses the reaction L-arginyl-[protein] + ATP = N(omega)-phospho-L-arginyl-[protein] + ADP + H(+). Catalyzes the specific phosphorylation of arginine residues in proteins. In Clostridium acetobutylicum (strain ATCC 824 / DSM 792 / JCM 1419 / IAM 19013 / LMG 5710 / NBRC 13948 / NRRL B-527 / VKM B-1787 / 2291 / W), this protein is Protein-arginine kinase.